A 368-amino-acid polypeptide reads, in one-letter code: Aspartate-semialdehyde dehydrogenase (368 aa).

Residues 10–13, 37–38, and Gln72 each bind NADP(+); these read RGMV and TS. Arg101 lines the phosphate pocket. The active-site Acyl-thioester intermediate is Cys134. Residues 160–161 and Pro191 each bind NADP(+); that span reads SG. Position 239 (Glu239) interacts with substrate. Lys242 contributes to the phosphate binding site. Arg266 serves as a coordination point for substrate. The active-site Proton acceptor is the His273. Gln349 is a binding site for NADP(+).

This sequence belongs to the aspartate-semialdehyde dehydrogenase family. In terms of assembly, homodimer.

It carries out the reaction L-aspartate 4-semialdehyde + phosphate + NADP(+) = 4-phospho-L-aspartate + NADPH + H(+). The protein operates within amino-acid biosynthesis; L-lysine biosynthesis via DAP pathway; (S)-tetrahydrodipicolinate from L-aspartate: step 2/4. Its pathway is amino-acid biosynthesis; L-methionine biosynthesis via de novo pathway; L-homoserine from L-aspartate: step 2/3. It participates in amino-acid biosynthesis; L-threonine biosynthesis; L-threonine from L-aspartate: step 2/5. In terms of biological role, catalyzes the NADPH-dependent formation of L-aspartate-semialdehyde (L-ASA) by the reductive dephosphorylation of L-aspartyl-4-phosphate. This chain is Aspartate-semialdehyde dehydrogenase, found in Azotobacter vinelandii.